Reading from the N-terminus, the 200-residue chain is ASI1-immunoprecipitated protein 1 (200 aa).

Positions 18–101 constitute an RRM domain; it reads RTVYVDELTP…RPVRACAAEP (84 aa).

In terms of assembly, component of the ASI1-AIPP1-EDM2 (AAE) RNA regulatory complex composed of at least AIPP1/EDM3, ASI1 and EDM2 and may contain CPL2, AIPP2 and AIPP3/BDT1. Binds directly to ASI1 and EDM2 and may function as a bridge protein between them. Co-associates with EDM2 to histone H3 lysine 9 dimethylation (H3K9me2)-marked chromatin and transcripts at a critical proximal polyadenylation site of RPP7 to hamper proximal transcript polyadeylation/termination.

It localises to the nucleus. In terms of biological role, prevents gene silencing by suppressing CHG methylation as well as histone H3 lysine 9 dimethylation (H3K9me2) status at target loci. Collaboratively with ASI1 and EDM2, the AAE complex regulates alternative RNA processing (e.g. alternative splicing) and epigenetic silencing (e.g. H3K9me2) of intronic heterochromatin-containing genes as well as genic heterochromatin-containing genes by promoting distal 3' polyadenylation, thus being required for the accumulation of their full-length transcripts. May also modulate transposable elements (TE) expression. Mediates RPP7-dependent race-specific disease resistance by promoting histone H3 lysine 9 dimethylation (H3K9me2) at the proximal RPP7 polyadenylation site, thus controlling alternative polyadenylation of RPP7 immune receptor transcripts and facilitating 2-phosphoserine RNAPII occupancy. In cv. Columbia, required for RPP7-dependent disease resistance against the Hyaloperonospora arabidopsidis isolate Hiks1. The chain is ASI1-immunoprecipitated protein 1 from Arabidopsis thaliana (Mouse-ear cress).